Consider the following 431-residue polypeptide: Serine hydroxymethyltransferase 1 (431 aa).

(6S)-5,6,7,8-tetrahydrofolate-binding positions include Leu127 and 131 to 133 (GHL). Lys236 carries the N6-(pyridoxal phosphate)lysine modification. Glu252 contributes to the (6S)-5,6,7,8-tetrahydrofolate binding site.

This sequence belongs to the SHMT family. As to quaternary structure, homodimer. It depends on pyridoxal 5'-phosphate as a cofactor.

The protein localises to the cytoplasm. It carries out the reaction (6R)-5,10-methylene-5,6,7,8-tetrahydrofolate + glycine + H2O = (6S)-5,6,7,8-tetrahydrofolate + L-serine. Its pathway is one-carbon metabolism; tetrahydrofolate interconversion. It functions in the pathway amino-acid biosynthesis; glycine biosynthesis; glycine from L-serine: step 1/1. In terms of biological role, catalyzes the reversible interconversion of serine and glycine with tetrahydrofolate (THF) serving as the one-carbon carrier. This reaction serves as the major source of one-carbon groups required for the biosynthesis of purines, thymidylate, methionine, and other important biomolecules. Also exhibits THF-independent aldolase activity toward beta-hydroxyamino acids, producing glycine and aldehydes, via a retro-aldol mechanism. The protein is Serine hydroxymethyltransferase 1 of Rhizobium meliloti (strain 1021) (Ensifer meliloti).